The sequence spans 304 residues: Small ribosomal subunit biogenesis GTPase RsgA (304 aa).

The CP-type G domain occupies 78 to 237 (HSFLTRPPVA…VADTPGFNRP (160 aa)). Residues 127–130 (TKTD) and 179–187 (GPSGVGKSS) contribute to the GTP site. Positions 262, 267, 269, and 275 each coordinate Zn(2+).

Belongs to the TRAFAC class YlqF/YawG GTPase family. RsgA subfamily. Monomer. Associates with 30S ribosomal subunit, binds 16S rRNA. Requires Zn(2+) as cofactor.

It localises to the cytoplasm. Its function is as follows. One of several proteins that assist in the late maturation steps of the functional core of the 30S ribosomal subunit. Helps release RbfA from mature subunits. May play a role in the assembly of ribosomal proteins into the subunit. Circularly permuted GTPase that catalyzes slow GTP hydrolysis, GTPase activity is stimulated by the 30S ribosomal subunit. The sequence is that of Small ribosomal subunit biogenesis GTPase RsgA from Synechococcus sp. (strain CC9605).